Reading from the N-terminus, the 324-residue chain is MKPSIILYKTLPDDLLHRLEAHFTVTQVPNLHPETVARHAQAFASAQGLLGASETVNRALLEKMPALRAASTISVGYDNVEVDALTARKIVLMHTPAVLTETVADTVMALMLATARRVVDVAERVKAGEWTESIGPAWFGVDVHHKTLGIVGMGRIGMALAQRAHFGFTMPVLYHARRRHQEAEDRFNARYCDLDTLLQEADFVCVILPLTTETRHLFGTTQFARMKSSAIFINAGRGPVVDENALIAALQNGEIYAAGLDVFEHEPLSVDSPLLNMSNVVAVPHIGSATHETRYNMMACAVDNLIDALQGKIEKNCVNPQAAG.

Residues arginine 237 and glutamate 266 contribute to the active site. The Proton donor role is filled by histidine 285.

The protein belongs to the D-isomer specific 2-hydroxyacid dehydrogenase family. GhrB subfamily. In terms of assembly, homodimer.

It localises to the cytoplasm. The catalysed reaction is glycolate + NADP(+) = glyoxylate + NADPH + H(+). It carries out the reaction (R)-glycerate + NAD(+) = 3-hydroxypyruvate + NADH + H(+). It catalyses the reaction (R)-glycerate + NADP(+) = 3-hydroxypyruvate + NADPH + H(+). Its function is as follows. Catalyzes the NADPH-dependent reduction of glyoxylate and hydroxypyruvate into glycolate and glycerate, respectively. The protein is Glyoxylate/hydroxypyruvate reductase B of Salmonella paratyphi A (strain ATCC 9150 / SARB42).